The following is a 361-amino-acid chain: DNA replication and repair protein RecF (361 aa).

Position 30–37 (Gly30–Thr37) interacts with ATP.

It belongs to the RecF family.

The protein resides in the cytoplasm. Functionally, the RecF protein is involved in DNA metabolism; it is required for DNA replication and normal SOS inducibility. RecF binds preferentially to single-stranded, linear DNA. It also seems to bind ATP. In Clostridium botulinum (strain Eklund 17B / Type B), this protein is DNA replication and repair protein RecF.